Consider the following 640-residue polypeptide: (Z)-beta-ocimene synthase TPS13PK, chloroplastic (640 aa).

A chloroplast-targeting transit peptide spans M1–R95. A disordered region spans residues M50–N69. Residues Q60 to N69 are compositionally biased toward polar residues. (2E)-geranyl diphosphate contacts are provided by R334, D371, D375, R515, and D518. Residues D371 and D375 each coordinate Mg(2+). The short motif at D371–D375 is the DDXXD motif element. Mg(2+) contacts are provided by D518, T522, and E526.

It belongs to the terpene synthase family. Monomer. Mg(2+) is required as a cofactor.

Its subcellular location is the plastid. It is found in the chloroplast. It carries out the reaction (2E)-geranyl diphosphate = (Z)-beta-ocimene + diphosphate. The protein operates within secondary metabolite biosynthesis; terpenoid biosynthesis. Functionally, involved in monoterpene (C10) olefins biosynthesis, constituants of cannabinoids and terpenoids-rich resins. Catalyzes mainly the conversion of (2E)-geranyl diphosphate to (Z)-beta-ocimene. This chain is (Z)-beta-ocimene synthase TPS13PK, chloroplastic, found in Cannabis sativa (Hemp).